Here is a 150-residue protein sequence, read N- to C-terminus: MKIILKQDVAKLGKRFDVVEVKDGFAIHFLFPKKLAAPLTKKAIANRDLFLKQQQEQYQKNRALAEKLKLVIEQTPLTFQLKQHDGKPYGSIITKQIINLAKQQRLDLQRFMFKDNVRLQFGEHKLILHLFEEITATLTVIVNPENGTTN.

It belongs to the bacterial ribosomal protein bL9 family.

Binds to the 23S rRNA. The protein is Large ribosomal subunit protein bL9 of Mycoplasma genitalium (strain ATCC 33530 / DSM 19775 / NCTC 10195 / G37) (Mycoplasmoides genitalium).